The chain runs to 889 residues: TATA box-binding protein-associated factor RNA polymerase I subunit B (889 aa).

The segment at 1 to 33 (MAPETNEKCKACGGFNFSMIDGFKYCDRCGTLL) adopts an RRN7-type zinc-finger fold. Residues cysteine 9, cysteine 12, cysteine 26, and cysteine 29 each contribute to the Zn(2+) site. The segment at 35–101 (NFEELEAEEG…DFFSRQALKN (67 aa)) is B-reader. The segment at 102–113 (DELAFPHESTPD) is B-linker. An N-terminal cyclin fold region spans residues 114–351 (YLYRLGLRLA…SAKEQETKEA (238 aa)). Residues 229 to 253 (NLDLDSEEDEEEEENPNLNKSMENL) form a disordered region. Residues 230-243 (LDLDSEEDEEEEEN) are compositionally biased toward acidic residues. The C-terminal cyclin fold stretch occupies residues 352–510 (MTKVDYAEPY…LLVFRLTFDI (159 aa)).

This sequence belongs to the RRN7/TAF1B family.

The protein localises to the nucleus. The protein resides in the nucleolus. Component of RNA polymerase I core factor complex that acts as a GTF2B/TFIIB-like factor and plays a key role in multiple steps during transcription initiation such as pre-initiation complex (PIC) assembly and postpolymerase recruitment events in polymerase I (Pol I) transcription. Binds rDNA promoters and plays a role in Pol I recruitment. This Caenorhabditis briggsae protein is TATA box-binding protein-associated factor RNA polymerase I subunit B.